The sequence spans 239 residues: MIKVLIVDDEPLARENLRVFLQEQSDIEIVGECSNAVEGIGAVHKLRPDVLFLDIQMPRISGLEMVGMLDPEHRPYIVFLTAFDEYAIKAFEEHAFDYLLKPIDEARLEKTLARLRQERSKQDVSLLPENQQALKFIPCTGHSRIYLLQMKDVAFVSSRMSGVYVTSHEGKEGFTELTLRTLESRTPLLRCHRQYLVNLAHLQEIRLEDNGQAELILRNGLTVPVSRRYLKSLKEAIGL.

In terms of domain architecture, Response regulatory spans 3–116; the sequence is KVLIVDDEPL…RLEKTLARLR (114 aa). Position 54 is a 4-aspartylphosphate (Asp-54). Residues 137–239 form the HTH LytTR-type domain; the sequence is IPCTGHSRIY…LKSLKEAIGL (103 aa).

In terms of processing, phosphorylated by BtsS.

Member of the two-component regulatory system BtsS/BtsR. BtsR regulates expression of btsT by binding to its promoter region. In Escherichia coli O6:H1 (strain CFT073 / ATCC 700928 / UPEC), this protein is Transcriptional regulatory protein BtsR.